We begin with the raw amino-acid sequence, 693 residues long: Elongation factor G (693 aa).

A tr-type G domain is found at 8–283 (NRCRNIGIMA…AVVDYLPSPL (276 aa)). GTP is bound by residues 17-24 (AHIDAGKT), 81-85 (DTPGH), and 135-138 (NKMD).

This sequence belongs to the TRAFAC class translation factor GTPase superfamily. Classic translation factor GTPase family. EF-G/EF-2 subfamily.

It is found in the cytoplasm. Catalyzes the GTP-dependent ribosomal translocation step during translation elongation. During this step, the ribosome changes from the pre-translocational (PRE) to the post-translocational (POST) state as the newly formed A-site-bound peptidyl-tRNA and P-site-bound deacylated tRNA move to the P and E sites, respectively. Catalyzes the coordinated movement of the two tRNA molecules, the mRNA and conformational changes in the ribosome. In Acidobacterium capsulatum (strain ATCC 51196 / DSM 11244 / BCRC 80197 / JCM 7670 / NBRC 15755 / NCIMB 13165 / 161), this protein is Elongation factor G.